We begin with the raw amino-acid sequence, 467 residues long: ATP synthase subunit beta (467 aa).

ATP is bound at residue 152-159; the sequence is GGAGVGKT.

The protein belongs to the ATPase alpha/beta chains family. As to quaternary structure, F-type ATPases have 2 components, CF(1) - the catalytic core - and CF(0) - the membrane proton channel. CF(1) has five subunits: alpha(3), beta(3), gamma(1), delta(1), epsilon(1). CF(0) has three main subunits: a(1), b(2) and c(9-12). The alpha and beta chains form an alternating ring which encloses part of the gamma chain. CF(1) is attached to CF(0) by a central stalk formed by the gamma and epsilon chains, while a peripheral stalk is formed by the delta and b chains.

Its subcellular location is the cell inner membrane. It carries out the reaction ATP + H2O + 4 H(+)(in) = ADP + phosphate + 5 H(+)(out). Functionally, produces ATP from ADP in the presence of a proton gradient across the membrane. The catalytic sites are hosted primarily by the beta subunits. The polypeptide is ATP synthase subunit beta (Wolinella succinogenes (strain ATCC 29543 / DSM 1740 / CCUG 13145 / JCM 31913 / LMG 7466 / NCTC 11488 / FDC 602W) (Vibrio succinogenes)).